Consider the following 443-residue polypeptide: Probable ribonuclease FAU-1 (443 aa).

Belongs to the FAU-1 family.

Probable RNase involved in rRNA stability through maturation and/or degradation of precursor rRNAs. Binds to RNA in loop regions with AU-rich sequences. The sequence is that of Probable ribonuclease FAU-1 from Pyrobaculum aerophilum (strain ATCC 51768 / DSM 7523 / JCM 9630 / CIP 104966 / NBRC 100827 / IM2).